Reading from the N-terminus, the 318-residue chain is GTP cyclohydrolase MptA (318 aa).

The protein belongs to the GTP cyclohydrolase IV family. Homodimer. Fe(2+) serves as cofactor.

It catalyses the reaction GTP + H2O = 7,8-dihydroneopterin 2',3'-cyclic phosphate + formate + diphosphate + H(+). Its pathway is cofactor biosynthesis; 5,6,7,8-tetrahydromethanopterin biosynthesis. In terms of biological role, converts GTP to 7,8-dihydro-D-neopterin 2',3'-cyclic phosphate, the first intermediate in the biosynthesis of coenzyme methanopterin. The polypeptide is GTP cyclohydrolase MptA (Methanosarcina acetivorans (strain ATCC 35395 / DSM 2834 / JCM 12185 / C2A)).